The following is a 386-amino-acid chain: Acyl-lipid omega-3 desaturase (cytochrome b5), endoplasmic reticulum (386 aa).

A disordered region spans residues 1 to 30; the sequence is MVVAMDQRTNVNGDPGAGDRKKEERFDPSA. The span at 17-27 shows a compositional bias: basic and acidic residues; that stretch reads AGDRKKEERFD. Residues 63–83 traverse the membrane as a helical segment; the sequence is IIAVAALAIAAVYVDSWFLWP. Positions 101-105 match the Histidine box-1 motif; sequence HDCGH. The short motif at 137-141 is the Histidine box-2 element; the sequence is HRTHH. A run of 2 helical transmembrane segments spans residues 220–240 and 242–262; these read WSIMFVSLIALSFVFGPLAVL and VYGVPYIIFVMWLDAVTYLHH. The short motif at 304–308 is the Histidine box-3 element; sequence HVIHH.

The protein belongs to the fatty acid desaturase type 1 family. In terms of tissue distribution, abundant in leaves and seedlings. Barely detectable in root tissue.

It localises to the endoplasmic reticulum membrane. It catalyses the reaction a (9Z,12Z)-octadecadienoyl-containing glycerolipid + 2 Fe(II)-[cytochrome b5] + O2 + 2 H(+) = (9Z,12Z,15Z)-octadecatrienoyl-containing glycerolipid + 2 Fe(III)-[cytochrome b5] + 2 H2O. It functions in the pathway lipid metabolism; polyunsaturated fatty acid biosynthesis. Functionally, microsomal (ER) omega-3 fatty acid desaturase introduces the third double bond in the biosynthesis of 18:3 fatty acids, important constituents of plant membranes. It is thought to use cytochrome b5 as an electron donor and to act on fatty acids esterified to phosphatidylcholine and, possibly, other phospholipids. The sequence is that of Acyl-lipid omega-3 desaturase (cytochrome b5), endoplasmic reticulum from Arabidopsis thaliana (Mouse-ear cress).